The sequence spans 422 residues: Inhibitory synaptic factor 2A (422 aa).

A disordered region spans residues 143 to 163 (FLADSKEKSEAGPMEEPRPCS). Basic and acidic residues predominate over residues 146-160 (DSKEKSEAGPMEEPR). Serine 177 is modified (phosphoserine). Residues 344-370 (TEVVDLKAQLQVMENLISSSQETIKVL) are a coiled coil.

Belongs to the INSYN2 family. Interacts with GPHN.

Its subcellular location is the postsynaptic density. In terms of biological role, component of the protein machinery at the inhibitory synapses, probably acting as a scaffold. Inhibitory synapses dampen neuronal activity through postsynaptic hyperpolarization. This synaptic inhibition is fundamental for the functioning of the central nervous system, shaping and orchestrating the flow of information through neuronal networks to generate a precise neural code. This Mus musculus (Mouse) protein is Inhibitory synaptic factor 2A.